A 449-amino-acid polypeptide reads, in one-letter code: Hyaluronidase-2 (449 aa).

A signal peptide spans 1 to 23 (MYHLWIKCLAAWIFLKRCNGVHA). 2 disulfides stabilise this stretch: Cys-47–Cys-340 and Cys-211–Cys-227. N-linked (GlcNAc...) asparagine glycosylation is found at Asn-67, Asn-103, and Asn-111. Glu-135 acts as the Proton donor in catalysis. Residue Asn-153 is glycosylated (N-linked (GlcNAc...) asparagine). N-linked (GlcNAc...) asparagine glycosylation is present at Asn-357. Intrachain disulfides connect Cys-365–Cys-376, Cys-370–Cys-427, and Cys-429–Cys-438. A glycan (N-linked (GlcNAc...) asparagine) is linked at Asn-401. Positions 427–438 (CQCYQGWKGLYC) constitute an EGF-like domain.

The protein belongs to the glycosyl hydrolase 56 family. As to quaternary structure, monomer. In terms of tissue distribution, expressed by the venom gland.

The protein resides in the secreted. It carries out the reaction Random hydrolysis of (1-&gt;4)-linkages between N-acetyl-beta-D-glucosamine and D-glucuronate residues in hyaluronate.. Snake venom endo-hyaluronidase that degrades hyaluronan to smaller oligosaccharide fragments. In venom, it is not toxic by itself, but increases the diffusion of other venom proteins by degrading the extracellular matrix. In addition, it displays antiedematogenic activity. This chain is Hyaluronidase-2, found in Bitis arietans (African puff adder).